A 596-amino-acid polypeptide reads, in one-letter code: MSEVEYNQENTHYAEVDNFDRDAMSQTRARSRSPVAGGAPSSDRRDRDRTDRTDRTDRSDRPRSFNDRAIASQHAATQASRKSQKNCRVYVGNLSYGVKWNTLKDFMREAVDVLLGDTRDGSITRARNASAARWLNESRRQCGWIADGKVLRFCPGWVTGGILQHLNHVRVAIQHSTRFPSFHRQPSIVYTAGHVVFSEVLTLPNGSSKGCGIVEYSTPEEAQKAIREMTNKQLEGRQVFVREDREDEVRYGTSPGGPPRGGGRGGLGGSSGRGSFGPPVRGGFYGGPPPPPYGGFGGGAPTQLFIGNLPFDVSWQDLKDLFRSAGNITRADINMGHDGRSKGSGIVAYADSNDASNAIAMYHGYEFRGRMLEVRLDKFASAPPMDPYGRAGYGPPPRGGRGGFGGAYGGRGGYGGRGGYGSGYGDPYGGGYSHEAYGGAYGGGYGGGYGDRHGAAGGYSTRASGPTSARAPAPPAAPSQQIFVKNLPWSTSNEDLVELFQTTGKVDEAEIVIGGGRSKGCGVVQFATVEDAETAIAKFNNYVYGGRPLDIEFNRRWTKFGTGGGSVNGGNDGNAPMVEVSAQDDEDGDAPVPMQG.

Polar residues predominate over residues Met1–Thr11. Disordered stretches follow at residues Met1–Ser83 and Asp244–Pro279. Basic and acidic residues-rich tracts occupy residues His12–Ala23 and Ser42–Asn66. The 65-residue stretch at Phe182–Glu246 folds into the RRM 1 domain. Positions Pro259 to Ser275 are enriched in gly residues. An RRM 2 domain is found at Thr302–Phe379. Residues Gly458–Pro478 form a disordered region. Residues Gln480–Arg556 enclose the RRM 3 domain. Residues Gly563–Asp572 are compositionally biased toward gly residues. The interval Gly563–Gly596 is disordered.

The protein localises to the nucleus. Binds to intron-containing transcripts and is involved in quality control for the export of spliced mRNAs from the nucleus. Binds to pre-mRNAs until splicing is completed or until faulty mRNAs are degraded. This chain is Serine/arginine (SR)-type shuttling mRNA binding protein, found in Mycosarcoma maydis (Corn smut fungus).